We begin with the raw amino-acid sequence, 264 residues long: Thymidylate synthase (264 aa).

Arg21 provides a ligand contact to dUMP. His51 contacts (6R)-5,10-methylene-5,6,7,8-tetrahydrofolate. Arg126–Arg127 serves as a coordination point for dUMP. Catalysis depends on Cys146, which acts as the Nucleophile. DUMP is bound by residues Arg166–Asp169, Asn177, and His207–Tyr209. Residue Asp169 participates in (6R)-5,10-methylene-5,6,7,8-tetrahydrofolate binding. Ser263 lines the (6R)-5,10-methylene-5,6,7,8-tetrahydrofolate pocket.

This sequence belongs to the thymidylate synthase family. Bacterial-type ThyA subfamily. In terms of assembly, homodimer.

The protein localises to the cytoplasm. The enzyme catalyses dUMP + (6R)-5,10-methylene-5,6,7,8-tetrahydrofolate = 7,8-dihydrofolate + dTMP. It participates in pyrimidine metabolism; dTTP biosynthesis. Its function is as follows. Catalyzes the reductive methylation of 2'-deoxyuridine-5'-monophosphate (dUMP) to 2'-deoxythymidine-5'-monophosphate (dTMP) while utilizing 5,10-methylenetetrahydrofolate (mTHF) as the methyl donor and reductant in the reaction, yielding dihydrofolate (DHF) as a by-product. This enzymatic reaction provides an intracellular de novo source of dTMP, an essential precursor for DNA biosynthesis. The chain is Thymidylate synthase from Nitrosococcus oceani (strain ATCC 19707 / BCRC 17464 / JCM 30415 / NCIMB 11848 / C-107).